The primary structure comprises 507 residues: Probable bifunctional methylthioribulose-1-phosphate dehydratase/enolase-phosphatase E1 (507 aa).

Residue alanine 2 is modified to N-acetylalanine. Positions 2–237 (AVAAAAMIGL…AIKLHQLGLD (236 aa)) are methylthioribulose-1-phosphate dehydratase. Residue cysteine 109 coordinates substrate. The Zn(2+) site is built by histidine 127 and histidine 129. The active-site Proton donor/acceptor is glutamate 152. Histidine 202 is a binding site for Zn(2+). An enolase-phosphatase E1 region spans residues 268-507 (IVLDIEGTTT…FKTVTSFSQI (240 aa)). Residues aspartate 271 and glutamate 273 each contribute to the Mg(2+) site. Substrate contacts are provided by residues 406–407 (SS) and lysine 440. Aspartate 466 lines the Mg(2+) pocket.

In the N-terminal section; belongs to the aldolase class II family. MtnB subfamily. It in the C-terminal section; belongs to the HAD-like hydrolase superfamily. MasA/MtnC family. Zn(2+) is required as a cofactor. Mg(2+) serves as cofactor.

It carries out the reaction 5-(methylsulfanyl)-D-ribulose 1-phosphate = 5-methylsulfanyl-2,3-dioxopentyl phosphate + H2O. It catalyses the reaction 5-methylsulfanyl-2,3-dioxopentyl phosphate + H2O = 1,2-dihydroxy-5-(methylsulfanyl)pent-1-en-3-one + phosphate. It participates in amino-acid biosynthesis; L-methionine biosynthesis via salvage pathway; L-methionine from S-methyl-5-thio-alpha-D-ribose 1-phosphate: step 2/6. The protein operates within amino-acid biosynthesis; L-methionine biosynthesis via salvage pathway; L-methionine from S-methyl-5-thio-alpha-D-ribose 1-phosphate: step 3/6. Its pathway is amino-acid biosynthesis; L-methionine biosynthesis via salvage pathway; L-methionine from S-methyl-5-thio-alpha-D-ribose 1-phosphate: step 4/6. The protein is Probable bifunctional methylthioribulose-1-phosphate dehydratase/enolase-phosphatase E1 of Arabidopsis thaliana (Mouse-ear cress).